We begin with the raw amino-acid sequence, 179 residues long: Peptidyl-tRNA hydrolase (179 aa).

Y15 provides a ligand contact to tRNA. H20 (proton acceptor) is an active-site residue. TRNA contacts are provided by Y66, N68, and N114.

This sequence belongs to the PTH family. Monomer.

It localises to the cytoplasm. It carries out the reaction an N-acyl-L-alpha-aminoacyl-tRNA + H2O = an N-acyl-L-amino acid + a tRNA + H(+). In terms of biological role, hydrolyzes ribosome-free peptidyl-tRNAs (with 1 or more amino acids incorporated), which drop off the ribosome during protein synthesis, or as a result of ribosome stalling. Its function is as follows. Catalyzes the release of premature peptidyl moieties from peptidyl-tRNA molecules trapped in stalled 50S ribosomal subunits, and thus maintains levels of free tRNAs and 50S ribosomes. The polypeptide is Peptidyl-tRNA hydrolase (Chlamydia trachomatis serovar L2 (strain ATCC VR-902B / DSM 19102 / 434/Bu)).